The following is a 965-amino-acid chain: Valine--tRNA ligase (965 aa).

Residues 1 to 22 (MENTPSHINKTEPSLDKTYSPQ) form a disordered region. Residues 56–66 (PNVTGSLHMGH) carry the 'HIGH' region motif. The 'KMSKS' region motif lies at 568-572 (KMSKS). Lysine 571 is a binding site for ATP. Positions 896 to 965 (LIDKATELDR…IEQQATIAAL (70 aa)) form a coiled coil.

It belongs to the class-I aminoacyl-tRNA synthetase family. ValS type 1 subfamily. Monomer.

Its subcellular location is the cytoplasm. The catalysed reaction is tRNA(Val) + L-valine + ATP = L-valyl-tRNA(Val) + AMP + diphosphate. Its function is as follows. Catalyzes the attachment of valine to tRNA(Val). As ValRS can inadvertently accommodate and process structurally similar amino acids such as threonine, to avoid such errors, it has a 'posttransfer' editing activity that hydrolyzes mischarged Thr-tRNA(Val) in a tRNA-dependent manner. The chain is Valine--tRNA ligase from Yersinia pestis.